The chain runs to 90 residues: MAFGKKPDFKKKPAQNPLFKRKRYCRFTVAGVEQIDYKDVDTLKDFIGENAKITPARLTGTKAKYQRQLDTAIKRARYLALLPFSDQHKK.

The protein belongs to the bacterial ribosomal protein bS18 family. In terms of assembly, part of the 30S ribosomal subunit. Forms a tight heterodimer with protein bS6.

Binds as a heterodimer with protein bS6 to the central domain of the 16S rRNA, where it helps stabilize the platform of the 30S subunit. The sequence is that of Small ribosomal subunit protein bS18 from Polynucleobacter asymbioticus (strain DSM 18221 / CIP 109841 / QLW-P1DMWA-1) (Polynucleobacter necessarius subsp. asymbioticus).